A 55-amino-acid polypeptide reads, in one-letter code: Small integral membrane protein 11 (55 aa).

A helical transmembrane segment spans residues 9–29; the sequence is VPLLLYILAAKTLILCLAFAG. Residues 34–54 are a coiled coil; that stretch reads QRRSLEGKLQAEKRKQSEKKA.

As to expression, expressed in brain, heart, kidney, thymus, liver, stomach, muscle, lung, testis, ovary, skin and eye.

Its subcellular location is the membrane. This chain is Small integral membrane protein 11, found in Mus musculus (Mouse).